A 147-amino-acid polypeptide reads, in one-letter code: Large ribosomal subunit protein uL13 (147 aa).

It belongs to the universal ribosomal protein uL13 family. Part of the 50S ribosomal subunit.

In terms of biological role, this protein is one of the early assembly proteins of the 50S ribosomal subunit, although it is not seen to bind rRNA by itself. It is important during the early stages of 50S assembly. In Mycobacterium marinum (strain ATCC BAA-535 / M), this protein is Large ribosomal subunit protein uL13.